Consider the following 267-residue polypeptide: MTKILDDIVAYKQQEIAALKQQKTEASLIAELETLTDAPRGFMRALRDCRDRGGVAVVAEIKRASPNQGLLREQFMPELLAQECVQYGASCLSVFTDTHFFYGDVAYLSAVKKAVPVPVLRKDFIISRYQILESRLLGVDCILLIVAILTDEQLQEFVVLAHDLGMDVLIEIHDENDLKRALNVPVRTLAINNRNPEDFNASLEKSAQLRQQLPKDYFVISESGINTHADVVYLLNCGLDAVLIGGALMSAEFAGEALHHLIYGKED.

Belongs to the TrpC family.

The catalysed reaction is 1-(2-carboxyphenylamino)-1-deoxy-D-ribulose 5-phosphate + H(+) = (1S,2R)-1-C-(indol-3-yl)glycerol 3-phosphate + CO2 + H2O. The protein operates within amino-acid biosynthesis; L-tryptophan biosynthesis; L-tryptophan from chorismate: step 4/5. This chain is Indole-3-glycerol phosphate synthase, found in Dichelobacter nodosus (strain VCS1703A).